The primary structure comprises 500 residues: Aldehyde dehydrogenase, mitochondrial (500 aa).

3 positions are modified to N6-acetyllysine: Lys35, Lys56, and Lys142. Gly245–Gly250 contacts NAD(+). Glu268 (proton acceptor) is an active-site residue. Cys302 acts as the Nucleophile in catalysis. N6-acetyllysine is present on residues Lys358, Lys366, Lys409, Lys411, Lys424, and Lys434.

It belongs to the aldehyde dehydrogenase family. Homotetramer. In response to mitochondrial stress, the precursor protein is ubiquitinated by the SIFI complex in the cytoplasm before mitochondrial import, leading to its degradation. Within the SIFI complex, UBR4 initiates ubiquitin chain that are further elongated or branched by KCMF1.

It is found in the mitochondrion matrix. The catalysed reaction is an aldehyde + NAD(+) + H2O = a carboxylate + NADH + 2 H(+). The protein operates within alcohol metabolism; ethanol degradation; acetate from ethanol: step 2/2. Required for clearance of cellular formaldehyde, a cytotoxic and carcinogenic metabolite that induces DNA damage. This is Aldehyde dehydrogenase, mitochondrial (ALDH2) from Equus caballus (Horse).